The chain runs to 234 residues: Purine nucleoside phosphorylase DeoD-type (234 aa).

Histidine 5 provides a ligand contact to a purine D-ribonucleoside. Phosphate is bound by residues glycine 21, arginine 25, arginine 44, and 88–91 (RIGT). Residues 180–182 (DME) and 204–205 (SD) contribute to the a purine D-ribonucleoside site. Residue aspartate 205 is the Proton donor of the active site.

This sequence belongs to the PNP/UDP phosphorylase family. In terms of assembly, homohexamer; trimer of homodimers.

It catalyses the reaction a purine D-ribonucleoside + phosphate = a purine nucleobase + alpha-D-ribose 1-phosphate. The enzyme catalyses a purine 2'-deoxy-D-ribonucleoside + phosphate = a purine nucleobase + 2-deoxy-alpha-D-ribose 1-phosphate. Functionally, catalyzes the reversible phosphorolytic breakdown of the N-glycosidic bond in the beta-(deoxy)ribonucleoside molecules, with the formation of the corresponding free purine bases and pentose-1-phosphate. This chain is Purine nucleoside phosphorylase DeoD-type, found in Buchnera aphidicola subsp. Acyrthosiphon pisum (strain 5A).